Consider the following 208-residue polypeptide: Small ribosomal subunit protein uS4 (208 aa).

The region spanning 98 to 168 (RRLDNVVFRL…DSLDTVVRRG (71 aa)) is the S4 RNA-binding domain.

Belongs to the universal ribosomal protein uS4 family. As to quaternary structure, part of the 30S ribosomal subunit. Contacts protein S5. The interaction surface between S4 and S5 is involved in control of translational fidelity.

In terms of biological role, one of the primary rRNA binding proteins, it binds directly to 16S rRNA where it nucleates assembly of the body of the 30S subunit. With S5 and S12 plays an important role in translational accuracy. The sequence is that of Small ribosomal subunit protein uS4 from Desulforapulum autotrophicum (strain ATCC 43914 / DSM 3382 / VKM B-1955 / HRM2) (Desulfobacterium autotrophicum).